Consider the following 274-residue polypeptide: MAPKLQWPIVTELTTASASRGAATGSRGVAPAVPRGGAPADVAHPQTIKSFVRRAGRTTAAQARAFEDLGPRFVVPYAPIAPIAPIAPAAPAAGAWFGRDAPLVLEIGFGMGEATAHIARVRPQDDFLCCEVHRPGVGALLKRIAEHGLTNIRILEHDAVEVIDHMLPESCLAGVHIFFPDPWHKSRHHKRRLIQPPLVARLAARLQAGGYLHCATDWQPYAEQMLQVLGAEPLLRNTAPGFAPKPGYRPLTKFENRGLRLGHGVRDLVFERRH.

Residues 16–40 (ASASRGAATGSRGVAPAVPRGGAPA) are disordered. 4 residues coordinate S-adenosyl-L-methionine: Glu-106, Glu-131, Asp-158, and Asp-181. Asp-181 is an active-site residue. Residues Lys-185, Asp-217, and 252 to 255 (TKFE) contribute to the substrate site.

The protein belongs to the class I-like SAM-binding methyltransferase superfamily. TrmB family.

The catalysed reaction is guanosine(46) in tRNA + S-adenosyl-L-methionine = N(7)-methylguanosine(46) in tRNA + S-adenosyl-L-homocysteine. It functions in the pathway tRNA modification; N(7)-methylguanine-tRNA biosynthesis. Its function is as follows. Catalyzes the formation of N(7)-methylguanine at position 46 (m7G46) in tRNA. The protein is tRNA (guanine-N(7)-)-methyltransferase of Verminephrobacter eiseniae (strain EF01-2).